The chain runs to 41 residues: Large ribosomal subunit protein bL36 (41 aa).

This sequence belongs to the bacterial ribosomal protein bL36 family.

This chain is Large ribosomal subunit protein bL36, found in Bartonella henselae (strain ATCC 49882 / DSM 28221 / CCUG 30454 / Houston 1) (Rochalimaea henselae).